The chain runs to 185 residues: 3-hexulose-6-phosphate isomerase (185 aa).

The region spanning 29 to 172 (LADHILSSHQ…ILKLMEKKGL (144 aa)) is the SIS domain. Substrate contacts are provided by residues serine 47 and 86-91 (SGSGET). Catalysis depends on glutamate 152, which acts as the Proton acceptor.

Belongs to the SIS family. PHI subfamily. As to quaternary structure, homotetramer.

The enzyme catalyses D-arabino-hex-3-ulose 6-phosphate = beta-D-fructose 6-phosphate. The protein operates within one-carbon metabolism; formaldehyde assimilation via RuMP pathway; D-fructose 6-phosphate from D-ribulose 5-phosphate and formaldehyde: step 2/2. Functionally, catalyzes the isomerization between 3-hexulose 6-phosphate and fructose 6-phosphate. Together with HxlA, may act as a formaldehyde detoxification system. In Bacillus subtilis (strain 168), this protein is 3-hexulose-6-phosphate isomerase (hxlB).